A 262-amino-acid chain; its full sequence is Imidazole glycerol phosphate synthase subunit HisF (262 aa).

Active-site residues include Asp-11 and Asp-130.

It belongs to the HisA/HisF family. As to quaternary structure, heterodimer of HisH and HisF.

It is found in the cytoplasm. It catalyses the reaction 5-[(5-phospho-1-deoxy-D-ribulos-1-ylimino)methylamino]-1-(5-phospho-beta-D-ribosyl)imidazole-4-carboxamide + L-glutamine = D-erythro-1-(imidazol-4-yl)glycerol 3-phosphate + 5-amino-1-(5-phospho-beta-D-ribosyl)imidazole-4-carboxamide + L-glutamate + H(+). It functions in the pathway amino-acid biosynthesis; L-histidine biosynthesis; L-histidine from 5-phospho-alpha-D-ribose 1-diphosphate: step 5/9. IGPS catalyzes the conversion of PRFAR and glutamine to IGP, AICAR and glutamate. The HisF subunit catalyzes the cyclization activity that produces IGP and AICAR from PRFAR using the ammonia provided by the HisH subunit. This Rhodopirellula baltica (strain DSM 10527 / NCIMB 13988 / SH1) protein is Imidazole glycerol phosphate synthase subunit HisF.